We begin with the raw amino-acid sequence, 333 residues long: DnaJ homolog subfamily C member 25 homolog (333 aa).

Residues 8–28 (LVLLALLPTMALGLLEGLYCG) traverse the membrane as a helical segment. Positions 31–99 (NCYDVLGVTR…ESRTDYDYML (69 aa)) constitute a J domain. Residues 123–143 (VRVVIVVVLTIVSVIQYYSGW) form a helical membrane-spanning segment. Residues 158-208 (KYRNQALEIARDEIQEKIQKKGKNRMSKNDQRDELERIIRRVIEEKMDVKG) adopt a coiled-coil conformation. A helical transmembrane segment spans residues 218-238 (VLWVQLIICPYTILSFIVWHA).

This sequence belongs to the DNAJC25 family.

The protein resides in the membrane. The protein is DnaJ homolog subfamily C member 25 homolog of Drosophila melanogaster (Fruit fly).